The chain runs to 397 residues: 8-amino-7-oxononanoate synthase (397 aa).

Arg21 serves as a coordination point for substrate. 110–111 (GY) lines the pyridoxal 5'-phosphate pocket. His135 is a binding site for substrate. Pyridoxal 5'-phosphate-binding residues include Ser181, His209, and Thr238. The residue at position 241 (Lys241) is an N6-(pyridoxal phosphate)lysine. Residue Thr355 coordinates substrate.

The protein belongs to the class-II pyridoxal-phosphate-dependent aminotransferase family. BioF subfamily. As to quaternary structure, homodimer. It depends on pyridoxal 5'-phosphate as a cofactor.

The enzyme catalyses 6-carboxyhexanoyl-[ACP] + L-alanine + H(+) = (8S)-8-amino-7-oxononanoate + holo-[ACP] + CO2. Its pathway is cofactor biosynthesis; biotin biosynthesis. In terms of biological role, catalyzes the decarboxylative condensation of pimeloyl-[acyl-carrier protein] and L-alanine to produce 8-amino-7-oxononanoate (AON), [acyl-carrier protein], and carbon dioxide. The protein is 8-amino-7-oxononanoate synthase of Saccharophagus degradans (strain 2-40 / ATCC 43961 / DSM 17024).